The chain runs to 91 residues: Small ribosomal subunit protein uS19 (91 aa).

Belongs to the universal ribosomal protein uS19 family.

In terms of biological role, protein S19 forms a complex with S13 that binds strongly to the 16S ribosomal RNA. The sequence is that of Small ribosomal subunit protein uS19 from Fusobacterium nucleatum subsp. nucleatum (strain ATCC 25586 / DSM 15643 / BCRC 10681 / CIP 101130 / JCM 8532 / KCTC 2640 / LMG 13131 / VPI 4355).